The chain runs to 195 residues: Probable DNA-directed RNA polymerase subunit delta (195 aa).

An HTH HARE-type domain is found at leucine 14–tryptophan 83. 2 stretches are compositionally biased toward acidic residues: residues glycine 119–glutamate 138 and tyrosine 145–glutamate 195. A disordered region spans residues glycine 119–glutamate 195.

It belongs to the RpoE family. RNAP is composed of a core of 2 alpha, a beta and a beta' subunits. The core is associated with a delta subunit and one of several sigma factors.

Functionally, participates in both the initiation and recycling phases of transcription. In the presence of the delta subunit, RNAP displays an increased specificity of transcription, a decreased affinity for nucleic acids, and an increased efficiency of RNA synthesis because of enhanced recycling. The polypeptide is Probable DNA-directed RNA polymerase subunit delta (Streptococcus gordonii (strain Challis / ATCC 35105 / BCRC 15272 / CH1 / DL1 / V288)).